We begin with the raw amino-acid sequence, 179 residues long: Peptidyl-tRNA hydrolase 2, mitochondrial (179 aa).

Residues 15–37 traverse the membrane as a helical segment; it reads STLGLAVGVACGMCLGWSLRVCF. Residues Lys47, Lys76, Lys81, Lys95, Lys106, Lys115, Lys171, and Lys177 each participate in a glycyl lysine isopeptide (Lys-Gly) (interchain with G-Cter in ubiquitin) cross-link.

The protein belongs to the PTH2 family. As to quaternary structure, monomer. Post-translationally, ubiquitinated by PRKN during mitophagy, leading to its degradation and enhancement of mitophagy. Deubiquitinated by USP30.

The protein resides in the mitochondrion outer membrane. It carries out the reaction an N-acyl-L-alpha-aminoacyl-tRNA + H2O = an N-acyl-L-amino acid + a tRNA + H(+). Functionally, peptidyl-tRNA hydrolase which releases tRNAs from the ribosome during protein synthesis. Promotes caspase-independent apoptosis by regulating the function of two transcriptional regulators, AES and TLE1. This chain is Peptidyl-tRNA hydrolase 2, mitochondrial (PTRH2), found in Homo sapiens (Human).